Here is a 300-residue protein sequence, read N- to C-terminus: Ribosomal RNA small subunit methyltransferase A (300 aa).

Positions 36, 38, 63, 84, 113, and 131 each coordinate S-adenosyl-L-methionine.

Belongs to the class I-like SAM-binding methyltransferase superfamily. rRNA adenine N(6)-methyltransferase family. RsmA subfamily.

It is found in the cytoplasm. It carries out the reaction adenosine(1518)/adenosine(1519) in 16S rRNA + 4 S-adenosyl-L-methionine = N(6)-dimethyladenosine(1518)/N(6)-dimethyladenosine(1519) in 16S rRNA + 4 S-adenosyl-L-homocysteine + 4 H(+). In terms of biological role, specifically dimethylates two adjacent adenosines (A1518 and A1519) in the loop of a conserved hairpin near the 3'-end of 16S rRNA in the 30S particle. May play a critical role in biogenesis of 30S subunits. The polypeptide is Ribosomal RNA small subunit methyltransferase A (Kineococcus radiotolerans (strain ATCC BAA-149 / DSM 14245 / SRS30216)).